We begin with the raw amino-acid sequence, 615 residues long: Elongation factor 4 (615 aa).

One can recognise a tr-type G domain in the interval 14–200 (SRIRNFCIIA…KVVELIPAPS (187 aa)). GTP contacts are provided by residues 26–31 (DHGKST) and 147–150 (NKID).

This sequence belongs to the TRAFAC class translation factor GTPase superfamily. Classic translation factor GTPase family. LepA subfamily.

Its subcellular location is the cell membrane. It catalyses the reaction GTP + H2O = GDP + phosphate + H(+). In terms of biological role, required for accurate and efficient protein synthesis under certain stress conditions. May act as a fidelity factor of the translation reaction, by catalyzing a one-codon backward translocation of tRNAs on improperly translocated ribosomes. Back-translocation proceeds from a post-translocation (POST) complex to a pre-translocation (PRE) complex, thus giving elongation factor G a second chance to translocate the tRNAs correctly. Binds to ribosomes in a GTP-dependent manner. This Corynebacterium efficiens (strain DSM 44549 / YS-314 / AJ 12310 / JCM 11189 / NBRC 100395) protein is Elongation factor 4.